We begin with the raw amino-acid sequence, 984 residues long: Lateral signaling target protein 2 homolog (984 aa).

Disordered regions lie at residues 308 to 462 (PLGS…DTDE), 508 to 527 (YGTT…PSTS), 539 to 642 (RLRL…SSLS), and 749 to 900 (DNVF…SPPA). 4 stretches are compositionally biased toward low complexity: residues 326–356 (TTSS…TTST), 369–380 (NNHNSNSNSSTN), 387–404 (TLRS…TPTA), and 412–433 (PSHS…PADW). Positions 434–462 (SDGDDEDEDDDDIEVDEEDLESSDDDTDE) are enriched in acidic residues. Phosphoserine occurs at positions 544 and 545. A compositionally biased stretch (basic residues) spans 571-611 (RESHSHRHHQRHHHHHHHRHSHQHQHRQPHPHRTTRSGRKR). Positions 630–642 (LASGDTSAASSLS) are enriched in low complexity. 2 stretches are compositionally biased toward polar residues: residues 760-779 (ATGQ…TIDL) and 789-806 (SGAT…SRSL). The residue at position 805 (serine 805) is a Phosphoserine. Low complexity-rich tracts occupy residues 811 to 869 (AASS…PVSA) and 886 to 899 (PSSA…LSPP). The FYVE-type zinc-finger motif lies at 904 to 964 (DGKAPRCMAC…VCRDCYVREV (61 aa)). Cysteine 910, cysteine 913, cysteine 926, cysteine 929, cysteine 934, cysteine 937, cysteine 956, and cysteine 959 together coordinate Zn(2+).

It belongs to the lst-2 family.

Functionally, negative regulator of epidermal growth factor receptor (EGFR) signaling. This chain is Lateral signaling target protein 2 homolog, found in Drosophila yakuba (Fruit fly).